The following is a 91-amino-acid chain: RNA-binding protein Hfq (91 aa).

In terms of domain architecture, Sm spans 9-68 (DPYLNALRRERIPVSIYLVNGIKLQGQIESFDQFVILLKNTVNQMVYKHAISTVVPARSV). The tract at residues 69–91 (SHHNNNHHTAPTEAVENVETQAE) is disordered.

The protein belongs to the Hfq family. Homohexamer.

Its function is as follows. RNA chaperone that binds small regulatory RNA (sRNAs) and mRNAs to facilitate mRNA translational regulation in response to envelope stress, environmental stress and changes in metabolite concentrations. Also binds with high specificity to tRNAs. The chain is RNA-binding protein Hfq from Haemophilus influenzae (strain ATCC 51907 / DSM 11121 / KW20 / Rd).